Here is a 431-residue protein sequence, read N- to C-terminus: Putative F-box/FBD/LRR-repeat protein At4g26350 (431 aa).

The F-box domain maps to 1 to 47 (MDIISQCPDHLLLRILSFIPTKDVIVTSLLSKRWGSLWRWVPKLEYD). LRR repeat units lie at residues 52 to 78 (NMRFVKFVYRSLLQNNAPVLESLHLKN), 85 to 109 (CRTVDIGGWIDIAVSRRVRELEISI), 132 to 159 (ILTIKHCHLVDVPLAVCLPSLKKLHLRC), 160 to 185 (IGWAYNATLLRLISGCTNLEELRLAR), and 309 to 334 (CTQGWWDLLTHMLQGSPKLRFLTLTN). One can recognise an FBD domain in the interval 348–398 (CWKRPSSVPACLLSSLQAFTWSGYKGRQGDKEVVKYVLRNATGLKKRIFIS).

This chain is Putative F-box/FBD/LRR-repeat protein At4g26350, found in Arabidopsis thaliana (Mouse-ear cress).